Reading from the N-terminus, the 313-residue chain is Ribosomal RNA small subunit methyltransferase H (313 aa).

S-adenosyl-L-methionine contacts are provided by residues G35 to H37, D55, F79, D101, and Q108.

The protein belongs to the methyltransferase superfamily. RsmH family.

It is found in the cytoplasm. It carries out the reaction cytidine(1402) in 16S rRNA + S-adenosyl-L-methionine = N(4)-methylcytidine(1402) in 16S rRNA + S-adenosyl-L-homocysteine + H(+). Its function is as follows. Specifically methylates the N4 position of cytidine in position 1402 (C1402) of 16S rRNA. The chain is Ribosomal RNA small subunit methyltransferase H from Musicola paradisiaca (strain Ech703) (Dickeya paradisiaca).